The sequence spans 327 residues: 1-aminocyclopropane-1-carboxylate oxidase 1 (327 aa).

The region spanning 157 to 257 is the Fe2OG dioxygenase domain; sequence PTFGTKVSNY…RMSIASFYNP (101 aa). 3 residues coordinate Fe cation: His181, Asp183, and His238.

The protein belongs to the iron/ascorbate-dependent oxidoreductase family. Fe cation is required as a cofactor.

It catalyses the reaction 1-aminocyclopropane-1-carboxylate + L-ascorbate + O2 = ethene + L-dehydroascorbate + hydrogen cyanide + CO2 + 2 H2O. Its pathway is alkene biosynthesis; ethylene biosynthesis via S-adenosyl-L-methionine; ethylene from S-adenosyl-L-methionine: step 2/2. The sequence is that of 1-aminocyclopropane-1-carboxylate oxidase 1 (ACO1) from Doritaenopsis sp. (Moth orchid).